Reading from the N-terminus, the 108-residue chain is RNA silencing suppressor (108 aa).

The basic stretch occupies residues 47-50 (RRRR). Residues 57 to 78 (CHRCYRLWPPTVFTTRCDNKYC) form a C4-type zinc finger.

The protein belongs to the carlaviruses nucleic acid-binding protein family.

Its function is as follows. Suppressor of viral-induced RNA silencing. The potential mechanism of action is based on sequestering siRNAs. The polypeptide is RNA silencing suppressor (Solanum tuberosum (Potato)).